A 169-amino-acid polypeptide reads, in one-letter code: Large ribosomal subunit protein uL18 (169 aa).

The protein belongs to the universal ribosomal protein uL18 family. In terms of assembly, part of the 50S ribosomal subunit. Contacts the 5S and 23S rRNAs.

In terms of biological role, this is one of the proteins that bind and probably mediate the attachment of the 5S RNA into the large ribosomal subunit, where it forms part of the central protuberance. In Methanothrix thermoacetophila (strain DSM 6194 / JCM 14653 / NBRC 101360 / PT) (Methanosaeta thermophila), this protein is Large ribosomal subunit protein uL18.